The chain runs to 229 residues: Urease accessory protein UreF (229 aa).

Belongs to the UreF family. UreD, UreF and UreG form a complex that acts as a GTP-hydrolysis-dependent molecular chaperone, activating the urease apoprotein by helping to assemble the nickel containing metallocenter of UreC. The UreE protein probably delivers the nickel.

The protein localises to the cytoplasm. Functionally, required for maturation of urease via the functional incorporation of the urease nickel metallocenter. The chain is Urease accessory protein UreF from Staphylococcus saprophyticus subsp. saprophyticus (strain ATCC 15305 / DSM 20229 / NCIMB 8711 / NCTC 7292 / S-41).